The chain runs to 349 residues: D-alanine--D-alanine ligase (349 aa).

The region spanning 132 to 335 is the ATP-grasp domain; sequence KHVFEAVGVP…YSDLIEKLVD (204 aa). Position 162 to 217 (162 to 217) interacts with ATP; the sequence is VEKLDFPVFVKPANMGSSVGISKVDDLADLQPALSEAYKYDNRVVIEQGVDAREIE. 3 residues coordinate Mg(2+): Asp-289, Glu-302, and Asn-304.

The protein belongs to the D-alanine--D-alanine ligase family. Requires Mg(2+) as cofactor. It depends on Mn(2+) as a cofactor.

Its subcellular location is the cytoplasm. It catalyses the reaction 2 D-alanine + ATP = D-alanyl-D-alanine + ADP + phosphate + H(+). It participates in cell wall biogenesis; peptidoglycan biosynthesis. Functionally, cell wall formation. This is D-alanine--D-alanine ligase from Lactococcus lactis subsp. cremoris (strain MG1363).